Reading from the N-terminus, the 541-residue chain is Tetratricopeptide repeat protein 8 (541 aa).

The stretch at 14 to 47 (YFRRRKFQLCADLCTQMLEKSPYDQEPDPELPVH) is one TPR 1 repeat. Residues 118-137 (PITGFLRPSTQSGRPGTMEQ) form a disordered region. TPR repeat units follow at residues 251–284 (WWWK…QEMV), 285–317 (DTFL…FPGE), 318–351 (VTLL…DNTH), 352–385 (VEAI…GIYN), 386–419 (GQLF…AENE), 423–456 (ADVW…NNNH), and 457–490 (AEAY…APHM).

Part of BBSome complex, that contains BBS1, BBS2, BBS4, BBS5, BBS7, BBS8/TTC8, BBS9 and BBIP10. Interacts with PCM1. Interacts with CCDC28B. Interacts with PKD1. Widely expressed.

Its subcellular location is the cytoplasm. The protein resides in the cytoskeleton. The protein localises to the microtubule organizing center. It is found in the centrosome. It localises to the cell projection. Its subcellular location is the cilium membrane. The protein resides in the centriolar satellite. The protein localises to the cilium. In terms of biological role, the BBSome complex is thought to function as a coat complex required for sorting of specific membrane proteins to the primary cilia. The BBSome complex is required for ciliogenesis but is dispensable for centriolar satellite function. This ciliogenic function is mediated in part by the Rab8 GDP/GTP exchange factor, which localizes to the basal body and contacts the BBSome. Rab8(GTP) enters the primary cilium and promotes extension of the ciliary membrane. Firstly the BBSome associates with the ciliary membrane and binds to RAB3IP/Rabin8, the guanosyl exchange factor (GEF) for Rab8 and then the Rab8-GTP localizes to the cilium and promotes docking and fusion of carrier vesicles to the base of the ciliary membrane. The BBSome complex, together with the LTZL1, controls SMO ciliary trafficking and contributes to the sonic hedgehog (SHH) pathway regulation. Required for proper BBSome complex assembly and its ciliary localization. This chain is Tetratricopeptide repeat protein 8 (TTC8), found in Homo sapiens (Human).